Consider the following 405-residue polypeptide: Arginine biosynthesis bifunctional protein ArgJ (405 aa).

Substrate is bound by residues threonine 155, lysine 181, threonine 192, glutamate 278, asparagine 400, and threonine 405. Catalysis depends on threonine 192, which acts as the Nucleophile.

The protein belongs to the ArgJ family. Heterotetramer of two alpha and two beta chains.

It localises to the cytoplasm. It carries out the reaction N(2)-acetyl-L-ornithine + L-glutamate = N-acetyl-L-glutamate + L-ornithine. The catalysed reaction is L-glutamate + acetyl-CoA = N-acetyl-L-glutamate + CoA + H(+). Its pathway is amino-acid biosynthesis; L-arginine biosynthesis; L-ornithine and N-acetyl-L-glutamate from L-glutamate and N(2)-acetyl-L-ornithine (cyclic): step 1/1. It functions in the pathway amino-acid biosynthesis; L-arginine biosynthesis; N(2)-acetyl-L-ornithine from L-glutamate: step 1/4. Its function is as follows. Catalyzes two activities which are involved in the cyclic version of arginine biosynthesis: the synthesis of N-acetylglutamate from glutamate and acetyl-CoA as the acetyl donor, and of ornithine by transacetylation between N(2)-acetylornithine and glutamate. This is Arginine biosynthesis bifunctional protein ArgJ from Dehalococcoides mccartyi (strain CBDB1).